Here is a 465-residue protein sequence, read N- to C-terminus: FAD-dependent monooxygenase pyr5 (465 aa).

The N-terminal stretch at 1–16 is a signal peptide; that stretch reads MRVLIIGGSIAGLTLA. FAD contacts are provided by E30, G44, and R103. Y210 is an active-site residue. Residues D306 and A319 each coordinate FAD. The helical transmembrane segment at 440 to 456 threads the bilayer; the sequence is PTFPLTVAGLCLVAIVI.

It belongs to the paxM FAD-dependent monooxygenase family. FAD serves as cofactor.

It localises to the membrane. The catalysed reaction is 4-hydroxy-3-[(2E,6E)-farnesyl]-6-(pyridin-3-yl)-2H-pyran-2-one + NADPH + O2 + H(+) = 2-oxo-3-[(8S)-epoxy-(2E,6E)-farnesyl]-6-(pyridin-3-yl)-2H-pyran-4-olate + NADP(+) + H2O. Its pathway is secondary metabolite biosynthesis; terpenoid biosynthesis. In terms of biological role, FAD-dependent monooxygenase; part of the gene cluster that mediates the biosynthesis of pyripyropene A, a specific human acyl-coenzyme A:cholesterol acyltransferase 2 inhibitor. The first step of the pathway is the synthesis of nicotinyl-CoA from nicotinic acid by the nicotinic acid-CoA ligase pyr1. Nicotinyl-CoA is then a substrate of polyketide synthase pyr2 to produce 4-hydroxy-6-(3-pyridinyl)-2H-pyran-2-one (HPPO) which is further prenylated by the polyprenyl transferase pyr6 to yield farnesyl-HPPO. The next steps consist of an epoxidation of farnesyl-HPPO to epoxyfarnesyl-HPPO by FAD-dependent monooxygenase pyr5 and a cyclization of the terpenoid portion by the terpene cyclase pyr4 to yield deacetyl-pyripyropene E. The 2 cytochrome P450 monooxygenases pyr3 and pyr9, and the 2 acetyltransferases pyr7 and pyr8 are involved in the conversion of deacetyl-pyripyropene E into pyripyropene A through several cycles of oxidation and acetylation steps. Pyr7 acetylates deacetyl-pyripyropene E to pyripyropene E which is oxidized to 11-deacetyl-pyripyropene O by pyr3, which is in turn acetylated into pyripyropene O by pyr8. Pyripyropene O is then oxidized to deacetyl-pyripyropene A by pyr9. Deacetyl-pyripyropene A is finally acetylated to pyripyropene A by pyr8. In Aspergillus fumigatus (strain ATCC MYA-4609 / CBS 101355 / FGSC A1100 / Af293) (Neosartorya fumigata), this protein is FAD-dependent monooxygenase pyr5.